The chain runs to 358 residues: Alanine racemase (358 aa).

Lys35 functions as the Proton acceptor; specific for D-alanine in the catalytic mechanism. The residue at position 35 (Lys35) is an N6-(pyridoxal phosphate)lysine. Arg130 is a substrate binding site. The active-site Proton acceptor; specific for L-alanine is Tyr255. Met303 contacts substrate.

It belongs to the alanine racemase family. It depends on pyridoxal 5'-phosphate as a cofactor.

It catalyses the reaction L-alanine = D-alanine. It functions in the pathway amino-acid biosynthesis; D-alanine biosynthesis; D-alanine from L-alanine: step 1/1. Functionally, catalyzes the interconversion of L-alanine and D-alanine. May also act on other amino acids. The protein is Alanine racemase (alr) of Shewanella sp. (strain W3-18-1).